The chain runs to 89 residues: MALTQERKNEIIKEYARHEGDTGSAEVQIAVLTADINELNVHMAAHKHDFHSQRGLMKKIGSRRNLLRYLRNTDIQRYRELIQRLGLRR.

This sequence belongs to the universal ribosomal protein uS15 family. As to quaternary structure, part of the 30S ribosomal subunit. Forms a bridge to the 50S subunit in the 70S ribosome, contacting the 23S rRNA.

Its function is as follows. One of the primary rRNA binding proteins, it binds directly to 16S rRNA where it helps nucleate assembly of the platform of the 30S subunit by binding and bridging several RNA helices of the 16S rRNA. In terms of biological role, forms an intersubunit bridge (bridge B4) with the 23S rRNA of the 50S subunit in the ribosome. This chain is Small ribosomal subunit protein uS15, found in Leuconostoc citreum (strain KM20).